Consider the following 242-residue polypeptide: Type III pantothenate kinase (242 aa).

6 to 13 contacts ATP; sequence DAGNTRLK. Residues Tyr-90 and 97–100 contribute to the substrate site; that span reads GADR. The active-site Proton acceptor is the Asp-99. Asp-119 contacts K(+). Ser-122 contributes to the ATP binding site. Thr-174 contributes to the substrate binding site.

It belongs to the type III pantothenate kinase family. Homodimer. The cofactor is NH4(+). K(+) serves as cofactor.

It is found in the cytoplasm. It carries out the reaction (R)-pantothenate + ATP = (R)-4'-phosphopantothenate + ADP + H(+). It functions in the pathway cofactor biosynthesis; coenzyme A biosynthesis; CoA from (R)-pantothenate: step 1/5. Its function is as follows. Catalyzes the phosphorylation of pantothenate (Pan), the first step in CoA biosynthesis. The sequence is that of Type III pantothenate kinase from Marinobacter nauticus (strain ATCC 700491 / DSM 11845 / VT8) (Marinobacter aquaeolei).